A 327-amino-acid chain; its full sequence is Nocardicin C-9' epimerase (327 aa).

Lys-43 is subject to N6-(pyridoxal phosphate)lysine.

The protein belongs to the ACC deaminase/D-cysteine desulfhydrase family. The cofactor is pyridoxal 5'-phosphate.

It carries out the reaction isonocardicin C = nocardicin C. The enzyme catalyses isonocardicin A = nocardicin A. It functions in the pathway antibiotic biosynthesis. In terms of biological role, involved in the biosynthesis of the beta-lactam antibiotic nocardicin A. Catalyzes the interconversion of the nocardicin homoseryl side chain in both nocardicin A with isonocardicin A, and nocardicin C with isonocardicin C. The chain is Nocardicin C-9' epimerase from Nocardia uniformis subsp. tsuyamanensis.